The following is a 208-amino-acid chain: Kininogen-1b (208 aa).

Positions 1 to 23 (MRLWFCLSFFIVLCLEHFPETLA) are cleaved as a signal peptide. Residues 27–44 (NVPESEEKTEQYLRDLPK) show a composition bias toward basic and acidic residues. The tract at residues 27–208 (NVPESEEKTE…RGKFHSQSHV (182 aa)) is disordered.

This sequence belongs to the bradykinin-related peptide family. Expressed by the skin glands.

The protein resides in the secreted. In vitro, produces constriction of guinea pig ileum smooth muscle. May target bradykinin receptors (BDKRB). In Bombina maxima (Giant fire-bellied toad), this protein is Kininogen-1b.